Reading from the N-terminus, the 312-residue chain is Photosystem I assembly protein Ycf4 (312 aa).

3 helical membrane-spanning segments follow: residues 42–62 (WAFIVCLGSIGFLLTGISSYF), 91–111 (IILFFPQGLVMCFYGILGLFL), and 113–133 (FYLWFSIFLNIGAGFNEIYIY).

The protein belongs to the Ycf4 family.

The protein localises to the plastid. It localises to the chloroplast thylakoid membrane. Functionally, seems to be required for the assembly of the photosystem I complex. The polypeptide is Photosystem I assembly protein Ycf4 (Pleurastrum terricola (Filamentous green alga)).